Consider the following 347-residue polypeptide: S-adenosylmethionine:tRNA ribosyltransferase-isomerase (347 aa).

It belongs to the QueA family. As to quaternary structure, monomer.

It localises to the cytoplasm. The catalysed reaction is 7-aminomethyl-7-carbaguanosine(34) in tRNA + S-adenosyl-L-methionine = epoxyqueuosine(34) in tRNA + adenine + L-methionine + 2 H(+). The protein operates within tRNA modification; tRNA-queuosine biosynthesis. In terms of biological role, transfers and isomerizes the ribose moiety from AdoMet to the 7-aminomethyl group of 7-deazaguanine (preQ1-tRNA) to give epoxyqueuosine (oQ-tRNA). This is S-adenosylmethionine:tRNA ribosyltransferase-isomerase from Pseudomonas aeruginosa (strain UCBPP-PA14).